The primary structure comprises 463 residues: Glutamate--tRNA ligase (463 aa).

A 'HIGH' region motif is present at residues 8-18 (PSPTGYLHIGG). Residues 236–240 (RLSKR) carry the 'KMSKS' region motif. Lys239 is an ATP binding site.

This sequence belongs to the class-I aminoacyl-tRNA synthetase family. Glutamate--tRNA ligase type 1 subfamily. As to quaternary structure, monomer.

The protein resides in the cytoplasm. It catalyses the reaction tRNA(Glu) + L-glutamate + ATP = L-glutamyl-tRNA(Glu) + AMP + diphosphate. Its function is as follows. Catalyzes the attachment of glutamate to tRNA(Glu) in a two-step reaction: glutamate is first activated by ATP to form Glu-AMP and then transferred to the acceptor end of tRNA(Glu). The chain is Glutamate--tRNA ligase from Nitrosomonas eutropha (strain DSM 101675 / C91 / Nm57).